Here is a 139-residue protein sequence, read N- to C-terminus: MLSPKRTKFRKQQRGRMRGLATGGNTINFGDFALQATEPCWITSRQIEAARRAMTRYIRRGGKIWIRVFPDKPVTQRAAETRMGSGKGSPEFWVAVVKPGFIMFEIAGVAEPVAREAMRLAAQKLPIKTKFITREEDFV.

This sequence belongs to the universal ribosomal protein uL16 family. As to quaternary structure, part of the 50S ribosomal subunit.

Its function is as follows. Binds 23S rRNA and is also seen to make contacts with the A and possibly P site tRNAs. This is Large ribosomal subunit protein uL16 from Microcystis aeruginosa (strain NIES-843 / IAM M-2473).